Consider the following 547-residue polypeptide: Chaperonin GroEL (547 aa).

ATP-binding positions include T30–P33, K51, D87–T91, G415, D479–A481, and D495.

Belongs to the chaperonin (HSP60) family. Forms a cylinder of 14 subunits composed of two heptameric rings stacked back-to-back. Interacts with the co-chaperonin GroES.

Its subcellular location is the cytoplasm. It catalyses the reaction ATP + H2O + a folded polypeptide = ADP + phosphate + an unfolded polypeptide.. Its function is as follows. Together with its co-chaperonin GroES, plays an essential role in assisting protein folding. The GroEL-GroES system forms a nano-cage that allows encapsulation of the non-native substrate proteins and provides a physical environment optimized to promote and accelerate protein folding. The sequence is that of Chaperonin GroEL from Dichelobacter nodosus (strain VCS1703A).